Consider the following 169-residue polypeptide: Peptide deformylase (169 aa).

Positions 91 and 133 each coordinate Fe cation. Glutamate 134 is an active-site residue. Residue histidine 137 participates in Fe cation binding.

This sequence belongs to the polypeptide deformylase family. Fe(2+) serves as cofactor.

The catalysed reaction is N-terminal N-formyl-L-methionyl-[peptide] + H2O = N-terminal L-methionyl-[peptide] + formate. Functionally, removes the formyl group from the N-terminal Met of newly synthesized proteins. Requires at least a dipeptide for an efficient rate of reaction. N-terminal L-methionine is a prerequisite for activity but the enzyme has broad specificity at other positions. This chain is Peptide deformylase, found in Aliivibrio salmonicida (strain LFI1238) (Vibrio salmonicida (strain LFI1238)).